The following is a 555-amino-acid chain: GMP synthase [glutamine-hydrolyzing] (555 aa).

Residues 8 to 234 (KILVLNFGSQ…AYNICKCKKQ (227 aa)) form the Glutamine amidotransferase type-1 domain. Catalysis depends on C89, which acts as the Nucleophile; for GATase activity. Residues Q93, N169, D172, and H208 each contribute to the L-glutamine site. Active-site for GATase activity residues include H208 and E210. The region spanning 235 to 430 (FDPIRYHELE…LNLPEEITNR (196 aa)) is the GMPS ATP-PPase domain. 262–268 (SGGIDST) is a binding site for ATP. The XMP site is built by R336, Q476, K547, I552, and E553.

In terms of assembly, homodimer (via the GMPS ATP-PPase domain). Mg(2+) serves as cofactor.

The enzyme catalyses XMP + L-glutamine + ATP + H2O = GMP + L-glutamate + AMP + diphosphate + 2 H(+). The protein operates within purine metabolism; GMP biosynthesis; GMP from XMP (L-Gln route): step 1/1. Its activity is regulated as follows. The GATase domain is allosterically activated by the binding of substrates, ATP and XMP, to the ATPPase domain, thus ensuring that glutamine hydrolysis occurs only when the ATPPase domain is primed to receive ammonia. Inhibited by Na(+). Inhibited by the reaction product GMP. Functionally, catalyzes the conversion of xanthine monophosphate (XMP) to GMP in the presence of glutamine and ATP through an adenyl-XMP intermediate, which is the final step of de novo synthesis of GMP. The conversion of XMP to GMP involves the coordinated action of the glutamine amidotransferase (GATase) domain that catalyzes the hydrolysis of the amide side chain of glutamine producing ammonia and the ATP pyrophosphatase (ATPPase) domain that catalyzes the synthesis of adenyl-XMP intermediate from ATP. The ammonia produced by the GATase domain is tunnelled to the ATP-PPase domain where it attacks the adenyl-XMP intermediate generating GMP. This Plasmodium falciparum (isolate 3D7) protein is GMP synthase [glutamine-hydrolyzing].